The chain runs to 1190 residues: Wings apart-like protein homolog (1190 aa).

Disordered regions lie at residues 1 to 23 and 46 to 82; these read MTSR…FDEV and QKRP…DESL. A mediates interaction with the cohesin complex region spans residues 1–659; sequence MTSRFGKTYS…ENQEFTDDIE (659 aa). Residues 54–66 are compositionally biased toward basic and acidic residues; that stretch reads DIQEIPKKPKVEE. Residues 73-75 carry the FGF motif 1 motif; that stretch reads FGF. S77 carries the post-translational modification Phosphoserine. At K168 the chain carries N6-acetyllysine. S221, S223, and S226 each carry phosphoserine. Residues 260 to 286 adopt a coiled-coil conformation; that stretch reads LLEMKDDDFKNRLENLNEAIEEDIVQS. 2 positions are modified to phosphoserine: S347 and S380. The FGF motif 2 signature appears at 429 to 431; it reads FGF. Position 443 is a phosphoserine (S443). Positions 453-455 match the FGF motif 3 motif; that stretch reads FGF. S459 and S461 each carry phosphoserine. The span at 459-469 shows a compositional bias: acidic residues; that stretch reads SESEDDEDDDC. Residues 459 to 553 are disordered; sequence SESEDDEDDD…SGPKRSPTKA (95 aa). Residues 494–509 show a composition bias toward polar residues; the sequence is SNDNSQDSQSGTNNAE. Residues 531–540 show a composition bias toward basic and acidic residues; sequence QGDKSKENTR. The WAPL domain maps to 626 to 1169; that stretch reads RREDKELYTV…KKFLSFMNLT (544 aa). Residues 749–782 adopt a coiled-coil conformation; that stretch reads ELEQDASSAKLLNEKDMNKIKEKIRRLCETVHNK. Phosphoserine is present on S904.

It belongs to the WAPL family. As to quaternary structure, interacts with the cohesin complex throughout the cell cycle; interacts with both chromatin-bound and soluble pools of the complex. Interacts with RAD21; the interaction is direct. Interacts with PDS5A; the interaction is direct, cohesin-dependent and competitive with CDCA5/SORORIN. Interacts (via FGF motifs) with PDS5B; the interaction is direct. Interacts with a SMC1 protein (SMC1A or SMC1B) and SMC3. In terms of assembly, (Microbial infection) Isoform 2 interacts with Epstein-Barr virus EBNA2. Deubiquitinated by USP37; leading to stabilization. As to expression, isoform 1 is highly expressed in uterine cervix tumor. Isoform 2 is widely expressed with a high level in skeletal muscle and heart.

It is found in the nucleus. Its subcellular location is the chromosome. The protein resides in the cytoplasm. In terms of biological role, regulator of sister chromatid cohesion in mitosis which negatively regulates cohesin association with chromatin. Involved in both sister chromatid cohesion during interphase and sister-chromatid resolution during early stages of mitosis. Couples DNA replication to sister chromatid cohesion. Cohesion ensures that chromosome partitioning is accurate in both meiotic and mitotic cells and plays an important role in DNA repair. The sequence is that of Wings apart-like protein homolog from Homo sapiens (Human).